We begin with the raw amino-acid sequence, 554 residues long: 3-(3-hydroxy-phenyl)propionate/3-hydroxycinnamic acid hydroxylase (554 aa).

FAD is bound by residues 17-46 (QVAI…VVEK) and 285-295 (FRIDRVLLAGD).

The protein belongs to the PheA/TfdB FAD monooxygenase family. The cofactor is FAD.

It carries out the reaction 3-(3-hydroxyphenyl)propanoate + NADH + O2 + H(+) = 3-(2,3-dihydroxyphenyl)propanoate + NAD(+) + H2O. It catalyses the reaction (2E)-3-(3-hydroxyphenyl)prop-2-enoate + NADH + O2 + H(+) = (2E)-3-(2,3-dihydroxyphenyl)prop-2-enoate + NAD(+) + H2O. It participates in aromatic compound metabolism; 3-phenylpropanoate degradation. In terms of biological role, catalyzes the insertion of one atom of molecular oxygen into position 2 of the phenyl ring of 3-(3-hydroxyphenyl)propionate (3-HPP) and hydroxycinnamic acid (3HCI). This is 3-(3-hydroxy-phenyl)propionate/3-hydroxycinnamic acid hydroxylase from Escherichia coli (strain K12 / DH10B).